Here is an 881-residue protein sequence, read N- to C-terminus: Plakophilin-2 (881 aa).

Positions methionine 1–aspartate 348 are required for interaction with influenza A virus RNA polymerase subunit PB1. The interval methionine 1–leucine 360 is required for binding to single-stranded DNA. Serine 44 carries the post-translational modification Phosphoserine. Residue arginine 46 is modified to Omega-N-methylarginine. Serine 82 carries the post-translational modification Phosphoserine; by MARK3. A phosphoserine mark is found at serine 132, serine 135, serine 151, serine 154, serine 155, serine 169, and serine 172. Residue threonine 177 is modified to Phosphothreonine. 5 positions are modified to phosphoserine: serine 183, serine 197, serine 251, serine 294, and serine 329. Residues glutamine 282 to glycine 314 are disordered. The span at serine 286–serine 297 shows a compositional bias: low complexity. ARM repeat units lie at residues aspartate 341–glutamine 383, serine 385–phenylalanine 424, asparagine 427–serine 467, aspartate 571–tyrosine 616, proline 671–alanine 711, serine 719–arginine 758, glutamine 763–glutamine 804, and tyrosine 807–alanine 849.

The protein belongs to the beta-catenin family. Interacts with DSC2. Interacts with JUP. Interacts with KRT5/CK5, KRT8/CK8, KRT14/CK14, KRT18/CK18 and VIM. Interacts (via N-terminus) with MARK3/C-TAK1. Interacts with DSP. Interacts with DSG1, DSG2 and DSG3. Interacts (via N-terminus) with CTNNB1. Interacts with CDH1. Interacts with the RNA polymerase III (Pol III) complex proteins POLR3A/RPC155, POLR3F/RPC39 and POLR3C/RPC82. Interacts with CTNNA3. Interacts (via N-terminus) with SCN5A/Nav1.5. Interacts with ANK3/ANKG and GJA1/CX43. In terms of assembly, (Microbial infection) Interacts (via N-terminus) with influenza A virus RNA polymerase subunit PB1 (via C-terminus); the interaction competitively inhibits the interaction between the subunits PB1 and PB2. Expressed at intercalated disks in the heart (at protein level). Expressed in gingival epithelial, endothelial and fibroblast cells (at protein level). Faintly expressed in tracheal epithelial cells (at protein level). Widely expressed. Found at desmosomal plaques in simple and stratified epithelia and in non-epithelial tissues such as myocardium and lymph node follicles. In most stratified epithelia found in the desmosomes of the basal cell layer and seems to be absent from suprabasal strata. As to expression, (Microbial infection) Abundantly expressed in tracheal epithelial cells following influenza A virus infection (at protein level).

The protein localises to the nucleus. Its subcellular location is the cell junction. It localises to the desmosome. It is found in the cytoplasm. A component of desmosome cell-cell junctions which are required for positive regulation of cellular adhesion. Regulates focal adhesion turnover resulting in changes in focal adhesion size, cell adhesion and cell spreading, potentially via transcriptional modulation of beta-integrins. Required to maintain gingival epithelial barrier function. Important component of the desmosome that is also required for localization of desmosome component proteins such as DSC2, DSG2 and JUP to the desmosome cell-cell junction. Required for the formation of desmosome cell junctions in cardiomyocytes, thereby required for the correct formation of the heart, specifically trabeculation and formation of the atria walls. Loss of desmosome cell junctions leads to mis-localization of DSP and DSG2 resulting in disruption of cell-cell adhesion and disordered intermediate filaments. Modulates profibrotic gene expression in cardiomyocytes via regulation of DSP expression and subsequent activation of downstream TGFB1 and MAPK14/p38 MAPK signaling. Required for cardiac sodium current propagation and electrical synchrony in cardiac myocytes, via ANK3 stabilization and modulation of SCN5A/Nav1.5 localization to cell-cell junctions. Required for mitochondrial function, nuclear envelope integrity and positive regulation of SIRT3 transcription via maintaining DES localization at its nuclear envelope and cell tip anchoring points, and thereby preserving regulation of the transcriptional program. Maintenance of nuclear envelope integrity protects against DNA damage and transcriptional dysregulation of genes, especially those involved in the electron transport chain, thereby preserving mitochondrial function and protecting against superoxide radical anion generation. Binds single-stranded DNA (ssDNA). May regulate the localization of GJA1 to gap junctions in intercalated disks of the heart. Involved in the inhibition of viral infection by influenza A viruses (IAV). Acts as a host restriction factor for IAV viral propagation, potentially via disrupting the interaction of IAV polymerase complex proteins. This Homo sapiens (Human) protein is Plakophilin-2.